The following is a 426-amino-acid chain: Enolase (426 aa).

Residue glutamine 165 participates in (2R)-2-phosphoglycerate binding. The active-site Proton donor is the glutamate 207. Mg(2+) contacts are provided by aspartate 244, glutamate 285, and aspartate 312. Lysine 337, arginine 366, serine 367, and lysine 388 together coordinate (2R)-2-phosphoglycerate. The Proton acceptor role is filled by lysine 337.

This sequence belongs to the enolase family. It depends on Mg(2+) as a cofactor.

The protein resides in the cytoplasm. It localises to the secreted. Its subcellular location is the cell surface. It catalyses the reaction (2R)-2-phosphoglycerate = phosphoenolpyruvate + H2O. It participates in carbohydrate degradation; glycolysis; pyruvate from D-glyceraldehyde 3-phosphate: step 4/5. Catalyzes the reversible conversion of 2-phosphoglycerate (2-PG) into phosphoenolpyruvate (PEP). It is essential for the degradation of carbohydrates via glycolysis. The polypeptide is Enolase (Cyanothece sp. (strain PCC 7425 / ATCC 29141)).